The primary structure comprises 134 residues: Small ribosomal subunit protein bS16 (134 aa).

The disordered stretch occupies residues Ala-79–Glu-134. A compositionally biased stretch (low complexity) spans Ala-115–Glu-134.

It belongs to the bacterial ribosomal protein bS16 family.

The protein is Small ribosomal subunit protein bS16 of Brucella canis (strain ATCC 23365 / NCTC 10854 / RM-666).